The sequence spans 747 residues: Probable alpha-galactosidase C (747 aa).

A signal peptide spans 1 to 24; it reads MVAFMNSATFVAGLFTLWSRPIWA. N-linked (GlcNAc...) asparagine glycosylation is found at N36, N182, N190, N362, N429, and N449. D507 functions as the Nucleophile in the catalytic mechanism. Residue N534 is glycosylated (N-linked (GlcNAc...) asparagine). The active-site Proton donor is D569.

This sequence belongs to the glycosyl hydrolase 36 family. Homotetramer. It depends on Mg(2+) as a cofactor. NAD(+) is required as a cofactor.

It localises to the secreted. The catalysed reaction is Hydrolysis of terminal, non-reducing alpha-D-galactose residues in alpha-D-galactosides, including galactose oligosaccharides, galactomannans and galactolipids.. Hydrolyzes a variety of simple alpha-D-galactoside as well as more complex molecules such as oligosaccharides and polysaccharides. This is Probable alpha-galactosidase C (aglC) from Aspergillus terreus (strain NIH 2624 / FGSC A1156).